The chain runs to 434 residues: ATP-dependent RNA helicase RhlB (434 aa).

The short motif at 9-37 (QKFADLGLEPQVLDGLNAKGFINCTPIQA) is the Q motif element. In terms of domain architecture, Helicase ATP-binding spans 40-219 (LPVLLAGQDI…FEHMQEPEHV (180 aa)). Position 53-60 (53-60 (AQTGTGKT)) interacts with ATP. The DEAD box motif lies at 165 to 168 (DEAD). The Helicase C-terminal domain occupies 245-390 (ALLQTLIEEE…QSDYDTSALL (146 aa)). Positions 394–434 (PAPIRLQRRPPQNRRNGSNNGQRQSGNRKHSRPRPPRSPQA) are disordered. Residues 406 to 418 (NRRNGSNNGQRQS) show a composition bias toward low complexity. Residues 419–428 (GNRKHSRPRP) show a composition bias toward basic residues.

It belongs to the DEAD box helicase family. RhlB subfamily. As to quaternary structure, component of the RNA degradosome, which is a multiprotein complex involved in RNA processing and mRNA degradation.

The protein localises to the cytoplasm. The enzyme catalyses ATP + H2O = ADP + phosphate + H(+). Functionally, DEAD-box RNA helicase involved in RNA degradation. Has RNA-dependent ATPase activity and unwinds double-stranded RNA. The sequence is that of ATP-dependent RNA helicase RhlB from Aliivibrio salmonicida (strain LFI1238) (Vibrio salmonicida (strain LFI1238)).